Here is a 242-residue protein sequence, read N- to C-terminus: Aquaporin (242 aa).

The Cytoplasmic segment spans residues 1-11 (MNTSTKLICQK). The helical transmembrane segment at 12-32 (LFAEMLCSCIFGFAVYSAILN) threads the bilayer. Topologically, residues 33 to 39 (TKASNSS) are extracellular. A helical transmembrane segment spans residues 40 to 60 (ISSTTVGLTVCFSSISLIYTF). The Cytoplasmic portion of the chain corresponds to 61–83 (CDHSVAHFNPAITIAAICTGKLD). Residues 69-71 (NPA) carry the NPA motif. A helical membrane pass occupies residues 84–104 (ILLGIGYVIAQLIGFILATLL). The Extracellular segment spans residues 105–133 (TVVCFPYGYLKTMEFIASARISDDISTVN). The helical transmembrane segment at 134–154 (LFFTEFILSFILVFIAFEVGI) threads the bilayer. The Cytoplasmic segment spans residues 155–175 (NAIREPGVTLFVGIKQIDRSK). Residues 176-196 (FAPLTIGITLGFLAFLASTTS) form a helical membrane-spanning segment. Residues 197-217 (GGAFNPGIVWGPAIMGGNFDD) are Extracellular-facing. The short motif at 201–203 (NPG) is the NPG element. The helical transmembrane segment at 218–238 (FVIYIISELSGGLLGAFIQVF) threads the bilayer. At 239–242 (LLFK) the chain is on the cytoplasmic side.

Belongs to the MIP/aquaporin (TC 1.A.8) family.

The protein resides in the cell membrane. Functionally, water channel required to facilitate the transport of water across membranes. Involved in osmotolerance. The protein is Aquaporin (AQP) of Enterocytozoon bieneusi (strain H348) (Microsporidian parasite).